A 291-amino-acid chain; its full sequence is MQENLLEKQFLNHPLYAKIQELKALNLACNFSLGDSVNLSTNSQAKDEILAIAKELKPWRKGPFKIDDLFIDTEWQSFIKFNILKPFMNEISQKCVADIGCNNGYYMFKMLEFNPAKLIGFDPSIKYRLQFELINALAKTPIKYELLGVEDLPSYSLKFDVIFCLGVIYHRSDPIKMLKDLKAGLNKNGVVFLDTMYIEDEREIALVPNKTYSKIPNIYFVPSISALKNWCERAGFKEFEVLATKKTDENEQRKTEWIDSFSLENFLDPKDKNLTIEGYEAPKRVYIRIKI.

Carboxy-S-adenosyl-L-methionine is bound by residues lysine 61, tryptophan 75, lysine 80, glycine 100, 122–124, 149–150, tyrosine 169, and arginine 284; these read DPS and VE.

Belongs to the class I-like SAM-binding methyltransferase superfamily. CmoB family. In terms of assembly, homotetramer.

It carries out the reaction carboxy-S-adenosyl-L-methionine + 5-hydroxyuridine(34) in tRNA = 5-carboxymethoxyuridine(34) in tRNA + S-adenosyl-L-homocysteine + H(+). Its function is as follows. Catalyzes carboxymethyl transfer from carboxy-S-adenosyl-L-methionine (Cx-SAM) to 5-hydroxyuridine (ho5U) to form 5-carboxymethoxyuridine (cmo5U) at position 34 in tRNAs. The chain is tRNA U34 carboxymethyltransferase from Campylobacter jejuni subsp. jejuni serotype O:2 (strain ATCC 700819 / NCTC 11168).